Here is a 148-residue protein sequence, read N- to C-terminus: Calmodulin-related protein 97A (148 aa).

EF-hand domains lie at 7–42 (EQIA…LGQN), 43–78 (PTEA…QMRE), 80–115 (DTEE…LGEK), and 116–148 (VTDE…ISQK). Ca(2+)-binding residues include Asp20, Thr24, Lys26, Glu31, Asn58, Asn60, Gln62, Glu67, Asp93, Asp95, Asp97, Glu104, Asp129, Asp131, Asp133, Met135, and Glu140.

Belongs to the calmodulin family.

Its function is as follows. May be involved in calcium-mediated signal transduction. This is Calmodulin-related protein 97A (Acam) from Drosophila melanogaster (Fruit fly).